The chain runs to 62 residues: Sperm protamine P1 (62 aa).

The interval 1–62 is disordered; that stretch reads MARCRRHSRS…RYSRRGRRRY (62 aa).

This sequence belongs to the protamine P1 family. In terms of tissue distribution, testis.

The protein localises to the nucleus. The protein resides in the chromosome. Functionally, protamines substitute for histones in the chromatin of sperm during the haploid phase of spermatogenesis. They compact sperm DNA into a highly condensed, stable and inactive complex. This is Sperm protamine P1 (PRM1) from Planigale maculata sinualis (Common planigale).